The chain runs to 342 residues: Anthranilate phosphoribosyltransferase (342 aa).

5-phospho-alpha-D-ribose 1-diphosphate-binding positions include Gly-80, 83 to 84 (GD), Thr-88, 90 to 93 (NIST), 108 to 116 (KHGNRAVSS), and Ser-120. Gly-80 lines the anthranilate pocket. A Mg(2+)-binding site is contributed by Ser-92. Anthranilate is bound at residue Asn-111. Arg-166 provides a ligand contact to anthranilate. The Mg(2+) site is built by Asp-225 and Glu-226.

It belongs to the anthranilate phosphoribosyltransferase family. As to quaternary structure, homodimer. The cofactor is Mg(2+).

It catalyses the reaction N-(5-phospho-beta-D-ribosyl)anthranilate + diphosphate = 5-phospho-alpha-D-ribose 1-diphosphate + anthranilate. It functions in the pathway amino-acid biosynthesis; L-tryptophan biosynthesis; L-tryptophan from chorismate: step 2/5. Functionally, catalyzes the transfer of the phosphoribosyl group of 5-phosphorylribose-1-pyrophosphate (PRPP) to anthranilate to yield N-(5'-phosphoribosyl)-anthranilate (PRA). In Halalkalibacterium halodurans (strain ATCC BAA-125 / DSM 18197 / FERM 7344 / JCM 9153 / C-125) (Bacillus halodurans), this protein is Anthranilate phosphoribosyltransferase.